Reading from the N-terminus, the 1280-residue chain is Clustered mitochondria protein homolog (1280 aa).

Polar residues predominate over residues Met-1 to Ser-27. Disordered regions lie at residues Met-1–Pro-49 and Gly-169–Tyr-189. The segment covering Val-32–Gly-43 has biased composition (acidic residues). Positions Asp-338 to Ile-582 constitute a Clu domain. Disordered regions lie at residues Lys-633–Gln-669, Gly-905–Leu-943, and Thr-1214–Pro-1280. A compositionally biased stretch (basic residues) spans Asn-635–Gln-648. A compositionally biased stretch (basic and acidic residues) spans Lys-649 to Gln-669. Residues Pro-1221–Ala-1235 are compositionally biased toward low complexity. A compositionally biased stretch (basic and acidic residues) spans Val-1245–Ser-1261. Residues Pro-1265–Pro-1280 are compositionally biased toward basic residues.

It belongs to the CLU family. In terms of assembly, may associate with the eukaryotic translation initiation factor 3 (eIF-3) complex.

Its subcellular location is the cytoplasm. Functionally, mRNA-binding protein involved in proper cytoplasmic distribution of mitochondria. This Phaeosphaeria nodorum (strain SN15 / ATCC MYA-4574 / FGSC 10173) (Glume blotch fungus) protein is Clustered mitochondria protein homolog.